Consider the following 348-residue polypeptide: MSNNGVNALPATGDLCDLTIVGGGPTGIFAAFQCGMNNMSCRIIESMPQLGGQLTALYPEKHIYDVAAFNEVQASGLVDSLWTQAGRYNPEVVLNDQAVSFKKLDDGSFVVMSAAGASFRSRALLIAAGLGAFTPRTLPQLGDVSHLEGSSLFYSVTSRNDFEGKRVVIVGGGDSALDWTMGLLPLAERVTVVHRMASFQGHGKTAHEVLDAREDGKIEVHFNTEVASLETSGSCLRRVCTRSKSGHEEVIDADCLLLLIGFKSNLGPIAQWGLELQDNAIVVDNQMKTSVDGLYAAGDIASYPGKLKIIQTGLSDATMAVRHSLSYIKPGEKIRHQFSSVKMAKEKK.

Residues Thr-26, Glu-45, Gln-53, Tyr-58, Ala-98, Phe-133, Asp-299, and Ser-340 each contribute to the FAD site.

This sequence belongs to the ferredoxin--NADP reductase type 2 family. Homodimer. Requires FAD as cofactor.

It catalyses the reaction 2 reduced [2Fe-2S]-[ferredoxin] + NADP(+) + H(+) = 2 oxidized [2Fe-2S]-[ferredoxin] + NADPH. In Prosthecochloris aestuarii (strain DSM 271 / SK 413), this protein is Ferredoxin--NADP reductase.